The sequence spans 71 residues: Plasticin-DA1 (71 aa).

The signal sequence occupies residues 1 to 22 (MAFLKKSLFLVLFLALVPLSIC). Residues 23-42 (EAEKREEENEEKQEDDDESE) constitute a propeptide that is removed on maturation. The interval 25–45 (EKREEENEEKQEDDDESEKKR) is disordered. The span at 30-40 (ENEEKQEDDDE) shows a compositional bias: acidic residues. Glycine 68 carries the post-translational modification Glycine amide. Positions 70 to 71 (ER) are excised as a propeptide.

This sequence belongs to the frog skin active peptide (FSAP) family. Plasticin subfamily. As to expression, expressed by the skin glands.

The protein localises to the secreted. Its subcellular location is the target cell membrane. Functionally, neutral peptide with no antimicrobial activity. Does not permeate bacterial membranes. May act in synergy with cationic peptides by enhancing their activity. Has a moderate hemolytic activity. It interacts with zwitterionic phospholipids (DMPC) without perturbing either the interface or inside of the bilayer, whereas it causes little perturbations at the interface peptide-anionic vesicles (DMPG) as well as in the bilayer alkyl chains. The polypeptide is Plasticin-DA1 (Agalychnis dacnicolor (Giant Mexican leaf frog)).